We begin with the raw amino-acid sequence, 249 residues long: MAGHSKFKNIQHRKGAQDKKKAKLFASLVREISLSAKSGADIQYNPRLRAAISAAKFNNLPKDRIEKAIAHANNKDNYENYFEITYEGIIFDGIAIIVEALTDNTNRTAANVRAIFSKYGGNLVGTGNASFLFDRLGIIKFESKVSTSEELFDAAIELGAEDIELDEEYHVVYTPIKLFTNIIEELAQLFGYPVESYIGWRPRNTVLISDTEKAQKLIKLVNALDDNDDVQRFFGNYEFSEQIYNNLLT.

This sequence belongs to the TACO1 family.

It is found in the cytoplasm. The chain is Probable transcriptional regulatory protein OTT_1378 from Orientia tsutsugamushi (strain Ikeda) (Rickettsia tsutsugamushi).